We begin with the raw amino-acid sequence, 142 residues long: Large ribosomal subunit protein uL11 (142 aa).

It belongs to the universal ribosomal protein uL11 family. As to quaternary structure, part of the ribosomal stalk of the 50S ribosomal subunit. Interacts with L10 and the large rRNA to form the base of the stalk. L10 forms an elongated spine to which L12 dimers bind in a sequential fashion forming a multimeric L10(L12)X complex. Post-translationally, one or more lysine residues are methylated.

In terms of biological role, forms part of the ribosomal stalk which helps the ribosome interact with GTP-bound translation factors. This chain is Large ribosomal subunit protein uL11, found in Enterobacter sp. (strain 638).